The chain runs to 324 residues: DNA primase small subunit PriS (324 aa).

Residues Asp94, Asp96, and Asp274 contribute to the active site.

It belongs to the eukaryotic-type primase small subunit family. In terms of assembly, heterodimer of a small subunit (PriS) and a large subunit (PriL). Requires Mg(2+) as cofactor. It depends on Mn(2+) as a cofactor.

Functionally, catalytic subunit of DNA primase, an RNA polymerase that catalyzes the synthesis of short RNA molecules used as primers for DNA polymerase during DNA replication. The small subunit contains the primase catalytic core and has DNA synthesis activity on its own. Binding to the large subunit stabilizes and modulates the activity, increasing the rate of DNA synthesis while decreasing the length of the DNA fragments, and conferring RNA synthesis capability. The DNA polymerase activity may enable DNA primase to also catalyze primer extension after primer synthesis. May also play a role in DNA repair. In Methanobrevibacter smithii (strain ATCC 35061 / DSM 861 / OCM 144 / PS), this protein is DNA primase small subunit PriS.